Here is a 296-residue protein sequence, read N- to C-terminus: Probable 2-(5''-triphosphoribosyl)-3'-dephosphocoenzyme-A synthase (296 aa).

It belongs to the CitG/MdcB family.

It catalyses the reaction 3'-dephospho-CoA + ATP = 2'-(5''-triphospho-alpha-D-ribosyl)-3'-dephospho-CoA + adenine. The polypeptide is Probable 2-(5''-triphosphoribosyl)-3'-dephosphocoenzyme-A synthase (Streptococcus mutans serotype c (strain ATCC 700610 / UA159)).